The chain runs to 596 residues: uncharacterized protein (596 aa).

Positions 1-31 are disordered; that stretch reads MSTSNDPVVSSHDPIKQEKEQETDLEAQVEH. The Cytoplasmic portion of the chain corresponds to 1–37; that stretch reads MSTSNDPVVSSHDPIKQEKEQETDLEAQVEHKKRNER. A compositionally biased stretch (basic and acidic residues) spans 13-22; the sequence is DPIKQEKEQE. Residues 38 to 58 form a helical membrane-spanning segment; it reads GNAFVGFLILIFVYYLLRGGS. Residues 59–596 lie on the Lumenal side of the membrane; it reads NDNDKQEMSH…ILVSDSGEEA (538 aa). Asn-118 is a glycosylation site (N-linked (GlcNAc...) asparagine). Zn(2+) is bound at residue His-197. Residue Asp-199 is part of the active site. Asp-232 is a Zn(2+) binding site. Glu-266 acts as the Proton acceptor in catalysis. Residues Glu-267 and Asp-295 each coordinate Zn(2+). Residues Asn-466, Asn-541, and Asn-555 are each glycosylated (N-linked (GlcNAc...) asparagine). His-565 is a binding site for Zn(2+).

The protein belongs to the peptidase M20A family. Requires Zn(2+) as cofactor.

It is found in the vacuole membrane. This is an uncharacterized protein from Schizosaccharomyces pombe (strain 972 / ATCC 24843) (Fission yeast).